Reading from the N-terminus, the 252-residue chain is 3-dehydroquinate dehydratase (252 aa).

3-dehydroquinate-binding positions include serine 21, 46–48 (EWR), and arginine 82. Histidine 143 functions as the Proton donor/acceptor in the catalytic mechanism. The active-site Schiff-base intermediate with substrate is lysine 170. 3-dehydroquinate-binding residues include arginine 213, serine 232, and glutamine 236.

It belongs to the type-I 3-dehydroquinase family. As to quaternary structure, homodimer.

The enzyme catalyses 3-dehydroquinate = 3-dehydroshikimate + H2O. The protein operates within metabolic intermediate biosynthesis; chorismate biosynthesis; chorismate from D-erythrose 4-phosphate and phosphoenolpyruvate: step 3/7. Its function is as follows. Involved in the third step of the chorismate pathway, which leads to the biosynthesis of aromatic amino acids. Catalyzes the cis-dehydration of 3-dehydroquinate (DHQ) and introduces the first double bond of the aromatic ring to yield 3-dehydroshikimate. The sequence is that of 3-dehydroquinate dehydratase from Escherichia coli O6:K15:H31 (strain 536 / UPEC).